Here is a 130-residue protein sequence, read N- to C-terminus: Small ribosomal subunit protein uS9 (130 aa).

The protein belongs to the universal ribosomal protein uS9 family.

This Idiomarina loihiensis (strain ATCC BAA-735 / DSM 15497 / L2-TR) protein is Small ribosomal subunit protein uS9.